We begin with the raw amino-acid sequence, 90 residues long: DNA-directed RNA polymerase subunit omega (90 aa).

Residues 69–90 (RQEQQEQDAAELAAVSSITHNR) are disordered.

This sequence belongs to the RNA polymerase subunit omega family. The RNAP catalytic core consists of 2 alpha, 1 beta, 1 beta' and 1 omega subunit. When a sigma factor is associated with the core the holoenzyme is formed, which can initiate transcription.

It catalyses the reaction RNA(n) + a ribonucleoside 5'-triphosphate = RNA(n+1) + diphosphate. Functionally, promotes RNA polymerase assembly. Latches the N- and C-terminal regions of the beta' subunit thereby facilitating its interaction with the beta and alpha subunits. The chain is DNA-directed RNA polymerase subunit omega from Aliivibrio fischeri (strain ATCC 700601 / ES114) (Vibrio fischeri).